A 727-amino-acid polypeptide reads, in one-letter code: Synaptic vesicle glycoprotein 2C (727 aa).

Positions 1-57 (MEDSYKDRTSLMKGAKDIAREVKKQTVKKVNQAVDRAQDEYTQRSYSRFQDEEDDDD) are interaction with SYT1. The Cytoplasmic segment spans residues 1 to 154 (MEDSYKDRTS…CGHGRFQWAL (154 aa)). Disordered regions lie at residues 24–84 (KQTV…GHDE) and 109–128 (VGQP…SERR). Residues serine 75 and serine 76 each carry the phosphoserine modification. Phosphothreonine is present on threonine 79. Basic and acidic residues predominate over residues 113 to 128 (KGDEYKDRRELESERR). Residues 155–175 (FFVLGMALMADGVEVFVVGFV) traverse the membrane as a helical segment. At 176–191 (LPSAETDLCIPNSGSG) the chain is on the extracellular side. The chain crosses the membrane as a helical span at residues 192 to 212 (WLGSIVYLGMMVGAFFWGGLA). At 213-226 (DKVGRKQSLLICMS) the chain is on the cytoplasmic side. A helical membrane pass occupies residues 227–247 (VNGFFAFLSSFVQGYGFFLFC). A topological domain (extracellular) is located at residue arginine 248. Residues 249 to 269 (LLSGFGIGGAIPTVFSYFAEV) form a helical membrane-spanning segment. Over 270–280 (LAREKRGEHLS) the chain is Cytoplasmic. The chain crosses the membrane as a helical span at residues 281–301 (WLCMFWMIGGIYASAMAWAII). At 302-320 (PHYGWSFSMGSAYQFHSWR) the chain is on the extracellular side. The chain crosses the membrane as a helical span at residues 321-341 (VFVIVCALPCVSSVVALTFMP). Over 342-437 (ESPRFLLEVG…PVRDNTIKLT (96 aa)) the chain is Cytoplasmic. The chain crosses the membrane as a helical span at residues 438-458 (IVWFTLSFGYYGLSVWFPDVI). At 459-578 (KPLQSDEYAL…CQITFDDDYS (120 aa)) the chain is on the extracellular side. Tyrosine 466 bears the Phosphotyrosine mark. Residues asparagine 480, asparagine 484, asparagine 534, asparagine 559, and asparagine 565 are each glycosylated (N-linked (GlcNAc...) asparagine). Residues 519–563 (SCTFEDVTSVNTYFKNCTFIDTVFDNTDFEPYKFIDSEFKNCSFF) are (Microbial infection) C.botulinum neurotoxin type A-binding. The chain crosses the membrane as a helical span at residues 579 to 599 (AYWIYFVNFLGTLAVLPGNIV). Residues 600–609 (SALLMDRIGR) lie on the Cytoplasmic side of the membrane. A helical transmembrane segment spans residues 610 to 630 (LTMLGGSMVLSGISCFFLWFG). At 631–636 (TSESMM) the chain is on the extracellular side. Residues 637–657 (IGMLCLYNGLTISAWNSLDVV) traverse the membrane as a helical segment. The Cytoplasmic segment spans residues 658-669 (TVELYPTDRRAT). Residues 670-690 (GFGFLNALCKAAAVLGNLIFG) form a helical membrane-spanning segment. The Extracellular segment spans residues 691-698 (SLVSITKS). A helical transmembrane segment spans residues 699–719 (IPILLASTVLVCGGLVGLCLP). Residues 720–727 (DTRTQVLM) lie on the Cytoplasmic side of the membrane.

This sequence belongs to the major facilitator superfamily. As to quaternary structure, interacts with SYT1 in a calcium-dependent manner. In terms of assembly, (Microbial infection) Interacts with C.botulinum neurotoxin type A1 and type A2 (BoNT/A, botA). Interaction is improved by glycosylation of SV2. N-glycosylated. Upon expression in a kidney cell line the most abundant glycan on Asn-534 is GlcNAc(3)Hex(5), while on Asn-559 and Asn-565 the most abundant glycan is GlcNAc2Fuc1Man3GlcNAc3Gal3. Both Asn-559 and Asn-565 have a high degree of glycan heterogeneity.

It localises to the cytoplasmic vesicle. It is found in the secretory vesicle. The protein localises to the synaptic vesicle membrane. In terms of biological role, plays a role in the control of regulated secretion in neural and endocrine cells, enhancing selectively low-frequency neurotransmission. Positively regulates vesicle fusion by maintaining the readily releasable pool of secretory vesicles. Its function is as follows. (Microbial infection) Receptor for C.botulinum neurotoxin type A (BoNT/A, botA); the toxin probably binds via extracellular loop 4. Recognition by BoNT/A relies on both protein-protein and protein-N-glycosylation; glycosylation of Asn-559 increases its affinity for BoNT/A. Also serves as a receptor for the closely related C.botulinum neurotoxin type A2; glycosylation is not essential but enhances the interaction. Functionally, (Microbial infection) Possible receptor for C.botulinum neurotoxin type D (BoNT/D, botD); note that type D does not usually infect humans. The protein is Synaptic vesicle glycoprotein 2C (SV2C) of Homo sapiens (Human).